The chain runs to 485 residues: Proline betaine:corrinoid methyltransferase (485 aa).

This sequence belongs to the trimethylamine methyltransferase family. In terms of assembly, the proline betaine:THF methyl transfer system is composed of two methyltransferases, MtpB and MtqA, and the corrinoid protein MtqC.

The catalysed reaction is Co(I)-[quaternary-amine-specific corrinoid protein] + L-proline betaine + H(+) = methyl-Co(III)-[quaternary-amine-specific corrinoid protein] + N-methyl-L-proline. In terms of biological role, involved in the degradation of the quaternary amine L-proline betaine. Component of a corrinoid-dependent methyltransferase system that transfers a methyl group from L-proline betaine to tetrahydrofolate (THF), forming methyl-THF, a key intermediate in the Wood-Ljungdahl acetogenesis pathway. MtpB catalyzes the methylation of the corrinoid protein MtqC, using L-proline betaine as the methyl donor. Shows weak activity with some other quaternary amines, including carnitine, phosphocholine, glycine betaine or betonicine, but cannot methylate free cob(I)alamin. The polypeptide is Proline betaine:corrinoid methyltransferase (Eubacterium limosum).